The chain runs to 438 residues: UDP-N-acetylmuramoylalanine--D-glutamate ligase (438 aa).

112 to 118 (GSNGKST) serves as a coordination point for ATP.

The protein belongs to the MurCDEF family.

It localises to the cytoplasm. The enzyme catalyses UDP-N-acetyl-alpha-D-muramoyl-L-alanine + D-glutamate + ATP = UDP-N-acetyl-alpha-D-muramoyl-L-alanyl-D-glutamate + ADP + phosphate + H(+). It participates in cell wall biogenesis; peptidoglycan biosynthesis. Its function is as follows. Cell wall formation. Catalyzes the addition of glutamate to the nucleotide precursor UDP-N-acetylmuramoyl-L-alanine (UMA). The chain is UDP-N-acetylmuramoylalanine--D-glutamate ligase from Escherichia coli O6:K15:H31 (strain 536 / UPEC).